The primary structure comprises 430 residues: Long-chain specific acyl-CoA dehydrogenase, mitochondrial (430 aa).

The N-terminal 30 residues, 1–30, are a transit peptide targeting the mitochondrion; sequence MATRLLRGSLRLWGGLCAPRLPTASRCSHS. Lys-42 bears the N6-acetyllysine mark. Phosphoserine is present on residues Ser-54 and Ser-55. N6-acetyllysine; alternate is present on residues Lys-66 and Lys-81. N6-succinyllysine; alternate is present on residues Lys-66 and Lys-81. Residues Lys-92 and Lys-95 each carry the N6-acetyllysine modification. The residue at position 165 (Lys-165) is an N6-succinyllysine. FAD-binding positions include 170 to 179 and 203 to 205; these read IAMTEPGAGS and FIT. Ser-179 serves as a coordination point for substrate. Position 227–228 (227–228) interacts with substrate; sequence AH. Lys-240 carries the N6-succinyllysine modification. Residues Lys-254 and Lys-279 each carry the N6-acetyllysine; alternate modification. Residues Lys-254 and Lys-279 each carry the N6-succinyllysine; alternate modification. Residues Tyr-282 and 289-292 contribute to the substrate site; that span reads PQER. The active-site Proton acceptor is Glu-291. An FAD-binding site is contributed by Arg-317. The residue at position 318 (Lys-318) is an N6-acetyllysine. Lys-322 bears the N6-acetyllysine; alternate mark. Residue Lys-322 is modified to N6-succinyllysine; alternate. Position 328 (Gln-328) interacts with FAD. Position 358 is an N6-acetyllysine (Lys-358). Phosphoserine is present on Ser-362. 385–389 contacts FAD; it reads QLHGG. Substrate is bound at residue 412 to 413; the sequence is GG. 414–416 contributes to the FAD binding site; sequence TNE.

It belongs to the acyl-CoA dehydrogenase family. In terms of assembly, homotetramer. FAD is required as a cofactor. In terms of processing, acetylation at Lys-318 and Lys-322 in proximity of the cofactor-binding sites strongly reduces catalytic activity. These sites are deacetylated by SIRT3.

The protein resides in the mitochondrion matrix. It carries out the reaction a long-chain 2,3-saturated fatty acyl-CoA + oxidized [electron-transfer flavoprotein] + H(+) = a long-chain (2E)-enoyl-CoA + reduced [electron-transfer flavoprotein]. The enzyme catalyses hexanoyl-CoA + oxidized [electron-transfer flavoprotein] + H(+) = (2E)-hexenoyl-CoA + reduced [electron-transfer flavoprotein]. It catalyses the reaction octanoyl-CoA + oxidized [electron-transfer flavoprotein] + H(+) = (2E)-octenoyl-CoA + reduced [electron-transfer flavoprotein]. The catalysed reaction is decanoyl-CoA + oxidized [electron-transfer flavoprotein] + H(+) = (2E)-decenoyl-CoA + reduced [electron-transfer flavoprotein]. It carries out the reaction dodecanoyl-CoA + oxidized [electron-transfer flavoprotein] + H(+) = (2E)-dodecenoyl-CoA + reduced [electron-transfer flavoprotein]. The enzyme catalyses tetradecanoyl-CoA + oxidized [electron-transfer flavoprotein] + H(+) = (2E)-tetradecenoyl-CoA + reduced [electron-transfer flavoprotein]. It catalyses the reaction oxidized [electron-transfer flavoprotein] + hexadecanoyl-CoA + H(+) = (2E)-hexadecenoyl-CoA + reduced [electron-transfer flavoprotein]. The catalysed reaction is octadecanoyl-CoA + oxidized [electron-transfer flavoprotein] + H(+) = (2E)-octadecenoyl-CoA + reduced [electron-transfer flavoprotein]. It carries out the reaction eicosanoyl-CoA + oxidized [electron-transfer flavoprotein] + H(+) = (2E)-eicosenoyl-CoA + reduced [electron-transfer flavoprotein]. The enzyme catalyses docosanoyl-CoA + oxidized [electron-transfer flavoprotein] + H(+) = (2E)-docosenoyl-CoA + reduced [electron-transfer flavoprotein]. It catalyses the reaction tetracosanoyl-CoA + oxidized [electron-transfer flavoprotein] + H(+) = (2E)-tetracosenoyl-CoA + reduced [electron-transfer flavoprotein]. The catalysed reaction is (5E)-tetradecenoyl-CoA + oxidized [electron-transfer flavoprotein] + H(+) = (2E,5E)-tetradecadienoyl-CoA + reduced [electron-transfer flavoprotein]. It carries out the reaction (5Z)-tetradecenoyl-CoA + oxidized [electron-transfer flavoprotein] + H(+) = (2E,5Z)-tetradecadienoyl-CoA + reduced [electron-transfer flavoprotein]. The enzyme catalyses oxidized [electron-transfer flavoprotein] + (9Z)-octadecenoyl-CoA + H(+) = (2E,9Z)-octadecadienoyl-CoA + reduced [electron-transfer flavoprotein]. It participates in lipid metabolism; mitochondrial fatty acid beta-oxidation. In terms of biological role, long-chain specific acyl-CoA dehydrogenase is one of the acyl-CoA dehydrogenases that catalyze the first step of mitochondrial fatty acid beta-oxidation, an aerobic process breaking down fatty acids into acetyl-CoA and allowing the production of energy from fats. The first step of fatty acid beta-oxidation consists in the removal of one hydrogen from C-2 and C-3 of the straight-chain fatty acyl-CoA thioester, resulting in the formation of trans-2-enoyl-CoA. Among the different mitochondrial acyl-CoA dehydrogenases, long-chain specific acyl-CoA dehydrogenase can act on saturated and unsaturated acyl-CoAs with 6 to 24 carbons with a preference for 8 to 18 carbons long primary chains. In Sus scrofa (Pig), this protein is Long-chain specific acyl-CoA dehydrogenase, mitochondrial.